Here is a 952-residue protein sequence, read N- to C-terminus: MKSQKIGSMILLIGILLAIFNFAYSDDDIERFSINPEKPISFTSDQPGFPTSADFPIGSILANSFYSFGGDVNYFQLNISLMEEFSKDGNTGSQATWNQYTSVPVSPISSAVTANRVYTMSIGSLNRVKKGDITSMESTDFLNDEKYSSLVTTLNGGVSYGDDVFFLSSKSATGEAVLIHINDTATGTFGTSSYDEILLDAAINDPSSITVDSKLGLAFIGDSDGDILVFNMTLKAKIAIYSNSSIANLRSSGVVDEERQLLYICGQAGGMNSYITQVDIFHYSATDITLLHSFTILGSLCPSAGIDVKGGQLFFSTTTSSGSQLIGTDTSGGNTGSLSENIANTQSVAISVDSITKTISVFYPDSVFYGTFKSICPSDCSGHGECNYGTCVCDHNYQGQGCEEELCLTLNNCTGTDNGKCENGFCYCSSEWEGAQCEIRRCKDSCNGYGTCNTANYTCVCDSAHMGETCNELVPPPPCTYYTDSESCLSRTTCGWCEVDGLCKEGDRYGPFEGFCRTWFFDTNVETGVIALACIFIAFVGILYIIDIGTTVPIDIKRAKDYAEENKSGQFPKATHEEASVLWWRDQRSHKAWTFMDQFQLISLVSHIGVVFPSRFISFTEYLDWSNLGIPLPPSINPPQIWSVPTDWTSNTARTILSMAQYENSLGSGDLYLLPNILFWFGLLLGVFLVPLLLAYAIISFMESLIHWKEVVTNRLIHVLVRILTFGYIGVLIAASFAMVTPLHDYRIIIPGAIIFVLYGIGLPIAIWFLLAVPEARLHNPTFKQRFGCLYVHYKPKTDHRFVVFMFIKRFIMAVIIGILSFKPMTNYPLTGTDLAVPIVQVVVIDIALIGYAVLLFIRKPYFDHYQLWLEYLLTAINIVTVSLSLTHIKSPSAAGELIACLIQALALVACIAAYVVAWLQMRSSFIKKVKKYLCCCCKSSKSSGEIDLSKK.

The signal sequence occupies residues 1–25 (MKSQKIGSMILLIGILLAIFNFAYS). At 26–527 (DDDIERFSIN…TWFFDTNVET (502 aa)) the chain is on the extracellular side. 5 N-linked (GlcNAc...) asparagine glycosylation sites follow: Asn78, Asn182, Asn231, Asn243, and Asn412. Residues 438-471 (EIRRCKDSCNGYGTCNTANYTCVCDSAHMGETCN) form the EGF-like domain. Disulfide bonds link Cys442/Cys452, Cys446/Cys459, and Cys461/Cys470. A glycan (N-linked (GlcNAc...) asparagine) is linked at Asn456. The chain crosses the membrane as a helical span at residues 528 to 548 (GVIALACIFIAFVGILYIIDI). Residues 549-591 (GTTVPIDIKRAKDYAEENKSGQFPKATHEEASVLWWRDQRSHK) are Cytoplasmic-facing. A helical transmembrane segment spans residues 592 to 612 (AWTFMDQFQLISLVSHIGVVF). The Extracellular segment spans residues 613–678 (PSRFISFTEY…GDLYLLPNIL (66 aa)). Residues 679–699 (FWFGLLLGVFLVPLLLAYAII) form a helical membrane-spanning segment. Residues 700-722 (SFMESLIHWKEVVTNRLIHVLVR) lie on the Cytoplasmic side of the membrane. A helical transmembrane segment spans residues 723-743 (ILTFGYIGVLIAASFAMVTPL). Residues 744-752 (HDYRIIIPG) lie on the Extracellular side of the membrane. A helical membrane pass occupies residues 753–773 (AIIFVLYGIGLPIAIWFLLAV). Over 774 to 801 (PEARLHNPTFKQRFGCLYVHYKPKTDHR) the chain is Cytoplasmic. Residues 802 to 822 (FVVFMFIKRFIMAVIIGILSF) traverse the membrane as a helical segment. Residues 823-837 (KPMTNYPLTGTDLAV) lie on the Extracellular side of the membrane. Residues 838–858 (PIVQVVVIDIALIGYAVLLFI) traverse the membrane as a helical segment. Over 859-868 (RKPYFDHYQL) the chain is Cytoplasmic. A helical transmembrane segment spans residues 869 to 889 (WLEYLLTAINIVTVSLSLTHI). Topologically, residues 890–897 (KSPSAAGE) are extracellular. A helical membrane pass occupies residues 898 to 918 (LIACLIQALALVACIAAYVVA). Over 919-952 (WLQMRSSFIKKVKKYLCCCCKSSKSSGEIDLSKK) the chain is Cytoplasmic.

It is found in the cell membrane. Its function is as follows. Involved in substrate adhesion, myosin-independent cytokinesis, organization of actin cytoskeleton, and phagocytosis. The protein is Substrate-adhesion molecule (sadA) of Dictyostelium discoideum (Social amoeba).